The primary structure comprises 724 residues: Protein Aster-A (724 aa).

Low complexity predominate over residues 1 to 18 (MFDTTPHSGRSTPSSSPS). The tract at residues 1–66 (MFDTTPHSGR…TPSTQSLGSR (66 aa)) is disordered. The segment covering 57 to 66 (TPSTQSLGSR) has biased composition (polar residues). In terms of domain architecture, GRAM spans 91-158 (EDFRKLFSKL…KEVTCLKKEK (68 aa)). Residues 256 to 336 (SSGAADRSQE…GPTTLGPLDL (81 aa)) are disordered. Phosphoserine occurs at positions 263, 267, and 271. A compositionally biased stretch (polar residues) spans 300–312 (DSQPDASSSQTVT). The span at 326–336 (DGPTTLGPLDL) shows a compositional bias: low complexity. The VASt domain maps to 367–538 (SGRLLINSVF…ELAKAEKLSL (172 aa)). Ser-415 carries the phosphoserine modification. Positions 560-579 (SWRAHGDGPQHPDPDPCARA) are disordered. Residues 563–575 (AHGDGPQHPDPDP) are compositionally biased toward basic and acidic residues. Residues 610-630 (LISIVICVSLIILIALNVLLF) traverse the membrane as a helical segment.

Expressed in liver.

The protein resides in the endoplasmic reticulum membrane. It localises to the cell membrane. It is found in the cytoplasmic vesicle. Its subcellular location is the autophagosome. Functionally, cholesterol transporter that mediates non-vesicular transport of cholesterol from the plasma membrane (PM) to the endoplasmic reticulum (ER). Contains unique domains for binding cholesterol and the PM, thereby serving as a molecular bridge for the transfer of cholesterol from the PM to the ER. Plays a crucial role in cholesterol homeostasis and has the unique ability to localize to the PM based on the level of membrane cholesterol. In lipid-poor conditions localizes to the ER membrane and in response to excess cholesterol in the PM is recruited to the endoplasmic reticulum-plasma membrane contact sites (EPCS) which is mediated by the GRAM domain. At the EPCS, the sterol-binding VASt/ASTER domain binds to the cholesterol in the PM and facilitates its transfer from the PM to ER. May play a role in tumor progression. Plays a role in autophagy regulation and is required for biogenesis of the autophagosome. This function in autophagy requires its cholesterol-transfer activity. This is Protein Aster-A from Homo sapiens (Human).